Consider the following 416-residue polypeptide: CinA-like protein (416 aa).

This sequence belongs to the CinA family.

The sequence is that of CinA-like protein from Synechocystis sp. (strain ATCC 27184 / PCC 6803 / Kazusa).